A 567-amino-acid polypeptide reads, in one-letter code: Urease subunit alpha (567 aa).

Residues 129 to 567 form the Urease domain; it reads GGVDTHIHFI…LPMAQRYFLF (439 aa). Ni(2+) is bound by residues histidine 134, histidine 136, and lysine 217. At lysine 217 the chain carries N6-carboxylysine. Substrate is bound at residue histidine 219. Histidine 246 and histidine 272 together coordinate Ni(2+). Catalysis depends on histidine 320, which acts as the Proton donor. Aspartate 360 serves as a coordination point for Ni(2+).

The protein belongs to the metallo-dependent hydrolases superfamily. Urease alpha subunit family. Heterotrimer of UreA (gamma), UreB (beta) and UreC (alpha) subunits. Three heterotrimers associate to form the active enzyme. Requires Ni cation as cofactor. In terms of processing, carboxylation allows a single lysine to coordinate two nickel ions.

Its subcellular location is the cytoplasm. It catalyses the reaction urea + 2 H2O + H(+) = hydrogencarbonate + 2 NH4(+). The protein operates within nitrogen metabolism; urea degradation; CO(2) and NH(3) from urea (urease route): step 1/1. This chain is Urease subunit alpha, found in Aliivibrio fischeri (strain MJ11) (Vibrio fischeri).